The sequence spans 129 residues: UPF0102 protein Ctha_1382 (129 aa).

It belongs to the UPF0102 family.

This Chloroherpeton thalassium (strain ATCC 35110 / GB-78) protein is UPF0102 protein Ctha_1382.